We begin with the raw amino-acid sequence, 319 residues long: Plasmodesmata-located protein 4 (319 aa).

The N-terminal stretch at methionine 1–threonine 26 is a signal peptide. Over serine 27–serine 288 the chain is Extracellular. Disulfide bonds link cysteine 39-cysteine 127, cysteine 103-cysteine 112, cysteine 115-cysteine 140, cysteine 177-cysteine 247, cysteine 223-cysteine 232, and cysteine 235-cysteine 260. Gnk2-homologous domains are found at residues asparagine 45–isoleucine 149 and histidine 170–histidine 269. The helical transmembrane segment at leucine 289–leucine 309 threads the bilayer. The necessary and sufficient for plasmodesmal targeting stretch occupies residues leucine 289–leucine 309. The Cytoplasmic portion of the chain corresponds to lysine 310–cysteine 319.

Belongs to the cysteine-rich repeat secretory protein family. Plasmodesmata-located proteins (PDLD) subfamily. In terms of assembly, (Microbial infection) Interacts with Grapevine fanleaf virus (GFLV) 2B-MP. In terms of tissue distribution, highly expressed in seeds and roots.

It localises to the cell membrane. Its subcellular location is the cell junction. It is found in the plasmodesma. Functionally, modulates cell-to-cell trafficking. The polypeptide is Plasmodesmata-located protein 4 (Arabidopsis thaliana (Mouse-ear cress)).